The sequence spans 277 residues: Large ribosomal subunit protein uL2 (277 aa).

The tract at residues 219–277 (TVRGSVMNPNDHPHGGGEGKAPVGRKAPSTPWGKPALGLKTRNKKAKSNKLIVRRRNEK) is disordered. The segment covering 259-277 (TRNKKAKSNKLIVRRRNEK) has biased composition (basic residues).

This sequence belongs to the universal ribosomal protein uL2 family. In terms of assembly, part of the 50S ribosomal subunit. Forms a bridge to the 30S subunit in the 70S ribosome.

One of the primary rRNA binding proteins. Required for association of the 30S and 50S subunits to form the 70S ribosome, for tRNA binding and peptide bond formation. It has been suggested to have peptidyltransferase activity; this is somewhat controversial. Makes several contacts with the 16S rRNA in the 70S ribosome. This chain is Large ribosomal subunit protein uL2, found in Streptococcus equi subsp. zooepidemicus (strain MGCS10565).